Consider the following 146-residue polypeptide: Hemoglobin subunit beta (146 aa).

The Globin domain occupies 2–146 (HWSAEEKQLI…VAHALARKYH (145 aa)). Heme b is bound by residues His63 and His92.

The protein belongs to the globin family. As to quaternary structure, heterotetramer of two alpha chains and two beta chains. Red blood cells.

In terms of biological role, involved in oxygen transport from the lung to the various peripheral tissues. The sequence is that of Hemoglobin subunit beta (HBB) from Psittacula krameri (Rose-ringed parakeet).